Reading from the N-terminus, the 417-residue chain is DnaJ protein homolog ANJ1 (417 aa).

The J domain occupies 11-76 (STRYYEILGV…REIYDQYGED (66 aa)). The segment at 135 to 219 (GTTKKLSLSR…CKGEKVVQEK (85 aa)) adopts a CR-type zinc-finger fold. CXXCXGXG motif repeat units lie at residues 148-155 (CSKCTGKG), 164-171 (CSGCQGTG), and 191-198 (CNECKGTG). The CXXCXGXG motif; approximate repeat unit spans residues 207–214 (CPQCKGEK). The interval 384-417 (IEEEMKRKQTQAQQEAYDEDDEPAGGQRVQCAQQ) is disordered. At Cys414 the chain carries Cysteine methyl ester. A lipid anchor (S-farnesyl cysteine) is attached at Cys414. Positions 415-417 (AQQ) are cleaved as a propeptide — removed in mature form.

The protein localises to the membrane. Its function is as follows. Plays a continuous role in plant development probably in the structural organization of compartments. The chain is DnaJ protein homolog ANJ1 from Atriplex nummularia (Old man saltbush).